The sequence spans 376 residues: 23S rRNA (uracil(747)-C(5))-methyltransferase RlmC (376 aa).

The [4Fe-4S] cluster site is built by cysteine 3, cysteine 11, cysteine 14, and cysteine 87. S-adenosyl-L-methionine-binding residues include glutamine 212, phenylalanine 241, glutamate 262, and asparagine 307. Cysteine 334 acts as the Nucleophile in catalysis.

This sequence belongs to the class I-like SAM-binding methyltransferase superfamily. RNA M5U methyltransferase family. RlmC subfamily.

It carries out the reaction uridine(747) in 23S rRNA + S-adenosyl-L-methionine = 5-methyluridine(747) in 23S rRNA + S-adenosyl-L-homocysteine + H(+). Functionally, catalyzes the formation of 5-methyl-uridine at position 747 (m5U747) in 23S rRNA. The polypeptide is 23S rRNA (uracil(747)-C(5))-methyltransferase RlmC (Yersinia pseudotuberculosis serotype O:1b (strain IP 31758)).